We begin with the raw amino-acid sequence, 674 residues long: Acetyl-coenzyme A synthetase (674 aa).

CoA-binding positions include 201-204 (RGGR) and T320. Residues 396-398 (GEP), 420-425 (DTYWQT), D518, and R533 contribute to the ATP site. S541 contacts CoA. Position 544 (R544) interacts with ATP. R603 is a CoA binding site.

This sequence belongs to the ATP-dependent AMP-binding enzyme family.

The enzyme catalyses acetate + ATP + CoA = acetyl-CoA + AMP + diphosphate. This Dictyostelium discoideum (Social amoeba) protein is Acetyl-coenzyme A synthetase (acsA).